Consider the following 489-residue polypeptide: Probable anthranilate synthase component 1 (489 aa).

L-tryptophan contacts are provided by residues Ser54 and 262–264; that span reads PYM. 297-298 serves as a coordination point for chorismate; it reads GT. Residue Glu324 coordinates Mg(2+). 2 positions are modified to phosphoserine: Ser390 and Ser392. Chorismate is bound by residues Tyr412, Arg433, 447–449, and Gly449; that span reads GGG. Residue Glu462 participates in Mg(2+) binding. The residue at position 488 (Ser488) is a Phosphoserine.

This sequence belongs to the anthranilate synthase component I family. In terms of assembly, tetramer of two components I and two components II. Requires Mg(2+) as cofactor.

The enzyme catalyses chorismate + L-glutamine = anthranilate + pyruvate + L-glutamate + H(+). It participates in amino-acid biosynthesis; L-tryptophan biosynthesis; L-tryptophan from chorismate: step 1/5. In Schizosaccharomyces pombe (strain 972 / ATCC 24843) (Fission yeast), this protein is Probable anthranilate synthase component 1 (trp3).